We begin with the raw amino-acid sequence, 294 residues long: Large ribosomal subunit protein uL4m (294 aa).

Positions 119-139 are disordered; it reads EVSGGGRKPWQQKGSGRARHG. Arg147 is modified (omega-N-methylarginine).

It belongs to the universal ribosomal protein uL4 family. Component of the mitochondrial ribosome large subunit (39S) which comprises a 16S rRNA and about 50 distinct proteins. Interacts with MIEF1 upstream open reading frame protein.

It is found in the mitochondrion. The chain is Large ribosomal subunit protein uL4m (Mrpl4) from Mus musculus (Mouse).